We begin with the raw amino-acid sequence, 1191 residues long: Roquin-2 (1191 aa).

The Zn(2+) site is built by C14, C17, C33, H35, C38, C50, and D53. The segment at 14-54 (CPICYNEFDENVHKPISLGCSHTVCKTCLNKLHRKACPFDQ) adopts an RING-type; degenerate zinc-finger fold. Positions 91 to 170 (ENKHYEVAKK…RTVTELILQH (80 aa)) are HEPN-N. The segment at 171–325 (QNPQQLSANL…SIIDKLQSPE (155 aa)) is ROQ. Residues 326–396 (SFAKSVQELT…GLVDFIQNYS (71 aa)) are HEPN-C. The C3H1-type zinc-finger motif lies at 410-438 (KYKTSMCRDLRQQGGCPRGTNCTFAHSQE). 2 disordered regions span residues 528–576 (GANG…NSVP) and 644–680 (ESSL…PQPY). A compositionally biased stretch (polar residues) spans 530-546 (NGQNAAGPSADSVTENK). S549 carries the phosphoserine modification. Over residues 554–576 (PVSNVAATSAGPSNVGTELNSVP) the composition is skewed to polar residues. A phosphoserine mark is found at S808, S983, and S1119.

Interacts with EDC4. Interacts with CCR4-NOT deadenylase complex. Interacts with MAP3K5; the interaction is probably stimulus-dependent. Post-translationally, proteolytically cleaved after Arg-509 and Arg-585 by MALT1 in activated CD4(+) T cells; cleavage at Arg-509 and Arg-585 is critical for promoting RC3H1 degradation in response to T-cell receptor (TCR) stimulation, and hence is necessary for prolonging the stability of a set of mRNAs controlling Th17 cell differentiation. As to expression, expressed in spleen, testis, ovary and small intestine.

The protein resides in the cytoplasm. Its subcellular location is the P-body. It catalyses the reaction S-ubiquitinyl-[E2 ubiquitin-conjugating enzyme]-L-cysteine + [acceptor protein]-L-lysine = [E2 ubiquitin-conjugating enzyme]-L-cysteine + N(6)-ubiquitinyl-[acceptor protein]-L-lysine.. The protein operates within protein modification; protein ubiquitination. Binding to dsRNA, but not CDE RNA, crosstalks with the E3 ubiquitin ligase activity and may inhibit ubiquitination. Post-transcriptional repressor of mRNAs containing a conserved stem loop motif, called constitutive decay element (CDE), which is often located in the 3'-UTR, as in HMGXB3, ICOS, IER3, NFKBID, NFKBIZ, PPP1R10, TNF and in many more mRNAs. Binds to CDE and promotes mRNA deadenylation and degradation. This process does not involve miRNAs. In follicular helper T (Tfh) cells, represses of ICOS and TNFRSF4 expression, thus preventing spontaneous Tfh cell differentiation, germinal center B-cell differentiation in the absence of immunization and autoimmunity. In resting or LPS-stimulated macrophages, controls inflammation by suppressing TNF expression. Also recognizes CDE in its own mRNA and in that of paralogous RC3H1, possibly leading to feedback loop regulation. miRNA-binding protein that regulates microRNA homeostasis. Enhances DICER-mediated processing of pre-MIR146a but reduces mature MIR146a levels through an increase of 3' end uridylation. Both inhibits ICOS mRNA expression and they may act together to exert the suppression. Acts as a ubiquitin E3 ligase. Pairs with E2 enzymes UBE2B, UBE2D2, UBE2E2, UBE2E3, UBE2G2, UBE2K and UBE2Q2 and produces polyubiquitin chains. Shows the strongest activity when paired with UBE2N:UBE2V1 or UBE2N:UBE2V2 E2 complexes and generate both short and long polyubiquitin chains. Involved in the ubiquitination of MAP3K5. Able to interact with double-stranded RNA (dsRNA). This chain is Roquin-2 (RC3H2), found in Homo sapiens (Human).